Consider the following 508-residue polypeptide: Aromatase (508 aa).

Cys-437 contributes to the heme binding site.

This sequence belongs to the cytochrome P450 family. The cofactor is heme.

The protein resides in the membrane. It catalyses the reaction testosterone + 3 reduced [NADPH--hemoprotein reductase] + 3 O2 = 17beta-estradiol + formate + 3 oxidized [NADPH--hemoprotein reductase] + 4 H2O + 4 H(+). It carries out the reaction androst-4-ene-3,17-dione + 3 reduced [NADPH--hemoprotein reductase] + 3 O2 = estrone + formate + 3 oxidized [NADPH--hemoprotein reductase] + 4 H2O + 4 H(+). Catalyzes the formation of aromatic C18 estrogens from C19 androgens. The sequence is that of Aromatase (Cyp19a1) from Rattus norvegicus (Rat).